Here is a 464-residue protein sequence, read N- to C-terminus: Antithrombin-III (464 aa).

A signal peptide spans 1 to 32 (MYSNVIGTVTSGKRKVYLLSLLLIGFWDCVTC). 2 disulfides stabilise this stretch: C40-C160 and C53-C127. At T63 the chain carries Phosphothreonine; by FAM20C. A Phosphoserine; by FAM20C modification is found at S68. W81 contacts heparin. An N-linked (GlcNAc...) asparagine glycan is attached at N128. R161 serves as a coordination point for heparin. N-linked (GlcNAc...) asparagine glycosylation occurs at N167. R177 lines the heparin pocket. N187 is a glycosylation site (N-linked (GlcNAc...) (complex) asparagine). N224 carries an N-linked (GlcNAc...) asparagine glycan. A disulfide bond links C279 and C462.

Belongs to the serpin family. Forms protease inhibiting heterodimer with TMPRSS7. Post-translationally, phosphorylated by FAM20C in the extracellular medium. Found in plasma.

Its subcellular location is the secreted. The protein localises to the extracellular space. Most important serine protease inhibitor in plasma that regulates the blood coagulation cascade. AT-III inhibits thrombin, matriptase-3/TMPRSS7, as well as factors IXa, Xa and XIa. Its inhibitory activity is greatly enhanced in the presence of heparin. This is Antithrombin-III (SERPINC1) from Homo sapiens (Human).